A 458-amino-acid chain; its full sequence is Flavohemoprotein (458 aa).

The region spanning 2–158 is the Globin domain; sequence PLSEDTIKAV…LAHLFVRREE (157 aa). His107 contacts heme b. Catalysis depends on charge relay system residues Tyr117 and Glu157. The segment at 169 to 457 is reductase; sequence GGWRQTRSFR…FEMFGPFKPL (289 aa). The 108-residue stretch at 172 to 279 folds into the FAD-binding FR-type domain; it reads RQTRSFRVEE…APPYGDFFLE (108 aa). FAD contacts are provided by residues Tyr211 and 228–231; that span reads RQYS. 320-325 contacts NADP(+); it reads GIGQTP. 450 to 453 serves as a coordination point for FAD; that stretch reads MFGP.

The protein belongs to the globin family. Two-domain flavohemoproteins subfamily. It in the C-terminal section; belongs to the flavoprotein pyridine nucleotide cytochrome reductase family. Monomer. The cofactor is heme b. FAD is required as a cofactor.

It carries out the reaction 2 nitric oxide + NADPH + 2 O2 = 2 nitrate + NADP(+) + H(+). The catalysed reaction is 2 nitric oxide + NADH + 2 O2 = 2 nitrate + NAD(+) + H(+). Its function is as follows. Flavohemoprotein involved in nitric oxide (NO) detoxification in an aerobic process, termed nitric oxide dioxygenase (NOD) reaction that utilizes O(2) and NAD(P)H to convert NO to nitrate, which protects the protozoan parasite from various noxious nitrogen compounds. Therefore, plays a central role in the inducible response to nitrosative stress. May also be involved in O(2) detoxification. This chain is Flavohemoprotein (hmpA), found in Giardia intestinalis (strain ATCC 50581 / GS clone H7) (Giardia lamblia).